A 267-amino-acid polypeptide reads, in one-letter code: Thyroxine 5-deiodinase (267 aa).

At 1-15 (MHDSGGVQMARALKH) the chain is on the cytoplasmic side. The helical; Signal-anchor for type II membrane protein transmembrane segment at 16–36 (AALCLMLLPRFLLAAVMLWLL) threads the bilayer. The Extracellular segment spans residues 37 to 267 (DFLCIRKKVL…VNSQTAVLHV (231 aa)). Sec131 is an active-site residue. Sec131 is a non-standard amino acid (selenocysteine).

Belongs to the iodothyronine deiodinase family. In terms of assembly, monomer. Homodimer. May undergo minor heretodimerization with DIO1 and DIO2.

Its subcellular location is the cell membrane. It localises to the endosome membrane. The catalysed reaction is 3,3',5'-triiodo-L-thyronine + iodide + A + H(+) = L-thyroxine + AH2. The enzyme catalyses 3,3'-diiodo-L-thyronine + iodide + A + H(+) = 3,3',5-triiodo-L-thyronine + AH2. It catalyses the reaction 3-iodo-L-thyronine + iodide + A + H(+) = 3,5-diiodo-L-thyronine + AH2. It carries out the reaction L-thyronine + iodide + A + H(+) = 3-iodo-L-thyronine + AH2. The catalysed reaction is 3',5'-diiodo-L-thyronine + iodide + A + H(+) = 3,3',5'-triiodo-L-thyronine + AH2. The enzyme catalyses 3'-iodo-L-thyronine + iodide + A + H(+) = 3,3'-diiodo-L-thyronine + AH2. It catalyses the reaction 3,3',5'-triiodothyronamine + iodide + A + H(+) = 3,3',5,5'-tetraiodothyronamine + AH2. It carries out the reaction 3',5'-diiodothyronamine + iodide + A + H(+) = 3,3',5'-triiodothyronamine + AH2. The catalysed reaction is 3,3'-diiodothyronamine + iodide + A + H(+) = 3,3',5-triiodothyronamine + AH2. The enzyme catalyses 3-iodothyronamine + iodide + A + H(+) = 3,5-diiodothyronamine + AH2. It catalyses the reaction 3'-iodothyronamine + iodide + A + H(+) = 3,3'-diiodothyronamine + AH2. It carries out the reaction thyronamine + iodide + A + H(+) = 3-iodothyronamine + AH2. In terms of biological role, plays a crucial role in the metabolism of thyroid hormones (TH) and has specific roles in TH activation and inactivation by deiodination. Catalyzes the deiodination of L-thyroxine (T4) to 3,3',5'-triiodothyronine (rT3), 3,5,3'-triiodothyronine (T3) to 3,3'-diiodothyronine (3,3'-T2), 3,5-diiodothyronine (3,5-T2) to 3-monoiodothyronine (3-T1), rT3 to 3',5'-diiodothyronine (3',5'-T2) and 3,3'-T2 to 3'-monoiodothyronine (3'-T1) via inner-ring deiodination (IRD). Catalyzes the deiodination of 3-T1 to L-thyronine (T0) via outer-ring deiodination (ORD). Catalyzes the tyrosyl ring deiodinations of 3,3',5,5'-tetraiodothyronamine, 3,3',5'-triiodothyronamine, 3,5,3'-triiodothyronamine, 3,5-diiodothyronamine, 3,3'-diiodothyronamine and 3-iodothyronamine. This chain is Thyroxine 5-deiodinase (dio3), found in Sparus aurata (Gilthead sea bream).